Here is a 147-residue protein sequence, read N- to C-terminus: Large ribosomal subunit protein bL9 (147 aa).

Belongs to the bacterial ribosomal protein bL9 family.

Binds to the 23S rRNA. This is Large ribosomal subunit protein bL9 from Thermodesulfovibrio yellowstonii (strain ATCC 51303 / DSM 11347 / YP87).